The primary structure comprises 429 residues: Serine--tRNA ligase (429 aa).

236–238 contacts L-serine; sequence TAE. Residue 267–269 participates in ATP binding; that stretch reads RSE. Glutamate 290 contacts L-serine. 354-357 is an ATP binding site; it reads EISS. Serine 390 contacts L-serine.

This sequence belongs to the class-II aminoacyl-tRNA synthetase family. Type-1 seryl-tRNA synthetase subfamily. In terms of assembly, homodimer. The tRNA molecule binds across the dimer.

It localises to the cytoplasm. It carries out the reaction tRNA(Ser) + L-serine + ATP = L-seryl-tRNA(Ser) + AMP + diphosphate + H(+). The catalysed reaction is tRNA(Sec) + L-serine + ATP = L-seryl-tRNA(Sec) + AMP + diphosphate + H(+). It participates in aminoacyl-tRNA biosynthesis; selenocysteinyl-tRNA(Sec) biosynthesis; L-seryl-tRNA(Sec) from L-serine and tRNA(Sec): step 1/1. Catalyzes the attachment of serine to tRNA(Ser). Is also able to aminoacylate tRNA(Sec) with serine, to form the misacylated tRNA L-seryl-tRNA(Sec), which will be further converted into selenocysteinyl-tRNA(Sec). This is Serine--tRNA ligase from Photorhabdus laumondii subsp. laumondii (strain DSM 15139 / CIP 105565 / TT01) (Photorhabdus luminescens subsp. laumondii).